The following is a 425-amino-acid chain: CinA-like protein (425 aa).

The protein belongs to the CinA family.

The polypeptide is CinA-like protein (Desulfovibrio desulfuricans (strain ATCC 27774 / DSM 6949 / MB)).